Reading from the N-terminus, the 341-residue chain is S-adenosylmethionine:tRNA ribosyltransferase-isomerase (341 aa).

The protein belongs to the QueA family. In terms of assembly, monomer.

It is found in the cytoplasm. It catalyses the reaction 7-aminomethyl-7-carbaguanosine(34) in tRNA + S-adenosyl-L-methionine = epoxyqueuosine(34) in tRNA + adenine + L-methionine + 2 H(+). Its pathway is tRNA modification; tRNA-queuosine biosynthesis. In terms of biological role, transfers and isomerizes the ribose moiety from AdoMet to the 7-aminomethyl group of 7-deazaguanine (preQ1-tRNA) to give epoxyqueuosine (oQ-tRNA). This chain is S-adenosylmethionine:tRNA ribosyltransferase-isomerase, found in Staphylococcus aureus (strain Mu3 / ATCC 700698).